A 420-amino-acid chain; its full sequence is 2-(3-amino-3-carboxypropyl)histidine synthase subunit 1 (420 aa).

The [4Fe-4S] cluster site is built by Cys127, Cys233, and Cys362.

The protein belongs to the DPH1/DPH2 family. DPH1 subfamily. In terms of assembly, component of the 2-(3-amino-3-carboxypropyl)histidine synthase complex composed of DPH1, DPH2, DPH3 and a NADH-dependent reductase, predominantly CBR1. The cofactor is [4Fe-4S] cluster.

It localises to the cytoplasm. The catalysed reaction is L-histidyl-[translation elongation factor 2] + S-adenosyl-L-methionine = 2-[(3S)-amino-3-carboxypropyl]-L-histidyl-[translation elongation factor 2] + S-methyl-5'-thioadenosine + H(+). The protein operates within protein modification; peptidyl-diphthamide biosynthesis. In terms of biological role, catalyzes the first step of diphthamide biosynthesis, a post-translational modification of histidine which occurs in elongation factor 2. DPH1 and DPH2 transfer a 3-amino-3-carboxypropyl (ACP) group from S-adenosyl-L-methionine (SAM) to a histidine residue, the reaction is assisted by a reduction system comprising DPH3 and a NADH-dependent reductase, predominantly CBR1. This is 2-(3-amino-3-carboxypropyl)histidine synthase subunit 1 (DPH1) from Debaryomyces hansenii (strain ATCC 36239 / CBS 767 / BCRC 21394 / JCM 1990 / NBRC 0083 / IGC 2968) (Yeast).